Consider the following 267-residue polypeptide: LysM and putative peptidoglycan-binding domain-containing protein 4 (267 aa).

Topologically, residues 1–211 (MRRGDPPPRA…RSNGADWGIQ (211 aa)) are extracellular. The disordered stretch occupies residues 30 to 64 (HRQEEPEASSEDEELNVMELRPRSRDSSSKEKEGV). The span at 35–45 (PEASSEDEELN) shows a compositional bias: acidic residues. A compositionally biased stretch (basic and acidic residues) spans 49-64 (LRPRSRDSSSKEKEGV). The LysM domain maps to 70 to 114 (LERDISHEDNLSKLALQYGCKVADIKRVNNLFQEQDMYALKSIKI). Asparagine 79 carries N-linked (GlcNAc...) asparagine glycosylation. Residues 130–152 (RTPQQRPSHDAAPSNSAMASVSG) form a disordered region. Polar residues predominate over residues 142-152 (PSNSAMASVSG). Residues 212–232 (WWNAVIAMLLIGIVLPIFYVV) form a helical membrane-spanning segment. Topologically, residues 233-267 (YYKTKDSGESAVDNVGVNISVSTSNSTREYNGKSP) are cytoplasmic.

The protein resides in the membrane. The protein is LysM and putative peptidoglycan-binding domain-containing protein 4 (lysmd4) of Danio rerio (Zebrafish).